Reading from the N-terminus, the 964-residue chain is Probable outer membrane protein PmpE (964 aa).

A signal peptide spans 1 to 18; sequence MKKAFFFFLIGNSLSGLA. The Autotransporter domain maps to 683–964; it reads LTPSGHPFWG…YLNGEIALRF (282 aa).

It belongs to the PMP outer membrane protein family.

Its subcellular location is the secreted. The protein localises to the cell wall. The protein resides in the cell outer membrane. In Chlamydia trachomatis serovar D (strain ATCC VR-885 / DSM 19411 / UW-3/Cx), this protein is Probable outer membrane protein PmpE (pmpE).